Reading from the N-terminus, the 236-residue chain is Ribitol-5-phosphate cytidylyltransferase (236 aa).

CTP is bound by residues 7-10 (LAGG) and 80-86 (GTDRNET).

Belongs to the IspD/TarI cytidylyltransferase family. TarI subfamily.

The catalysed reaction is D-ribitol 5-phosphate + CTP + H(+) = CDP-L-ribitol + diphosphate. Its pathway is cell wall biogenesis; poly(ribitol phosphate) teichoic acid biosynthesis. In terms of biological role, catalyzes the transfer of the cytidylyl group of CTP to D-ribitol 5-phosphate. This Listeria monocytogenes serovar 1/2a (strain ATCC BAA-679 / EGD-e) protein is Ribitol-5-phosphate cytidylyltransferase.